The sequence spans 511 residues: 2-isopropylmalate synthase (511 aa).

The region spanning 5 to 267 is the Pyruvate carboxyltransferase domain; sequence IQIFDTTLRD…ESQINLEETK (263 aa). Residues Asp14, His202, His204, and Asn238 each coordinate Mn(2+). The segment at 391–511 is regulatory domain; the sequence is QLDNLQLQYV…EYELKEGIRT (121 aa).

This sequence belongs to the alpha-IPM synthase/homocitrate synthase family. LeuA type 1 subfamily. Homodimer. The cofactor is Mn(2+).

It is found in the cytoplasm. The catalysed reaction is 3-methyl-2-oxobutanoate + acetyl-CoA + H2O = (2S)-2-isopropylmalate + CoA + H(+). Its pathway is amino-acid biosynthesis; L-leucine biosynthesis; L-leucine from 3-methyl-2-oxobutanoate: step 1/4. Its function is as follows. Catalyzes the condensation of the acetyl group of acetyl-CoA with 3-methyl-2-oxobutanoate (2-ketoisovalerate) to form 3-carboxy-3-hydroxy-4-methylpentanoate (2-isopropylmalate). The chain is 2-isopropylmalate synthase from Staphylococcus epidermidis (strain ATCC 35984 / DSM 28319 / BCRC 17069 / CCUG 31568 / BM 3577 / RP62A).